A 503-amino-acid chain; its full sequence is NAD-dependent protein deacetylase HST1 (503 aa).

A Deacetylase sirtuin-type domain is found at 183 to 468; that stretch reads RLPNFNTIDH…SLVAKKCHWD (286 aa). Residues 208–227 and 290–293 contribute to the NAD(+) site; these read GAGV…EGFY and QNID. The active-site Proton acceptor is the His-310. Zn(2+)-binding residues include Cys-318, Cys-321, Cys-342, and Cys-345. NAD(+) contacts are provided by residues 412–414, 437–439, and Cys-454; these read GTS and NRD.

This sequence belongs to the sirtuin family. Class I subfamily. In terms of assembly, identified in the Set3C complex with HOS2, SIF2, SNT1, CPR1, HOS4/YIL112W and SET3. Its presence is however not essential for meiotic repression by the Set3C complex. Interacts with SUM1 and RFM1. The interaction with SUM1 is mediated by RFM1. It depends on Zn(2+) as a cofactor.

Its subcellular location is the nucleus. It carries out the reaction N(6)-acetyl-L-lysyl-[protein] + NAD(+) + H2O = 2''-O-acetyl-ADP-D-ribose + nicotinamide + L-lysyl-[protein]. Its function is as follows. NAD-dependent histone deacetylase involved in telomeric silencing. Histone deacetylase proteins act via the formation of large multiprotein complexes that are responsible for the deacetylation of lysine residues on the N-terminal part of the core histones (H2A, H2B, H3 and H4). Histone deacetylation gives a tag for epigenetic repression and plays an important role in transcriptional regulation, cell cycle progression and developmental events. Restores silencing at HMR in SIR2 mutants when overexpressed. Required to repress middle sporulation genes during vegetative growth. Acts as a sensor of NAD(+) levels and regulator of NAD(+) biosynthesis. Regulates the gene expression of de novo NAD(+) biosynthesis genes. The polypeptide is NAD-dependent protein deacetylase HST1 (HST1) (Saccharomyces cerevisiae (strain ATCC 204508 / S288c) (Baker's yeast)).